A 213-amino-acid chain; its full sequence is Na(+)-translocating NADH-quinone reductase subunit D (213 aa).

6 consecutive transmembrane segments (helical) span residues 21-41, 42-62, 69-86, 101-121, 131-151, and 183-203; these read PLIAILGICSALAVTTTVNTA, ITMGLAVSFVTGCSSFFVSLL, SVRMITQLIIISLFVIVI, LSVFVGLIITNCIVMGRAESL, FLDGLASGLGYGWVLVTVSIV, and FGLMVLAPSAFFLLGIMIWGV.

It belongs to the NqrDE/RnfAE family. As to quaternary structure, composed of six subunits; NqrA, NqrB, NqrC, NqrD, NqrE and NqrF.

It localises to the cell inner membrane. It carries out the reaction a ubiquinone + n Na(+)(in) + NADH + H(+) = a ubiquinol + n Na(+)(out) + NAD(+). Its function is as follows. NQR complex catalyzes the reduction of ubiquinone-1 to ubiquinol by two successive reactions, coupled with the transport of Na(+) ions from the cytoplasm to the periplasm. NqrA to NqrE are probably involved in the second step, the conversion of ubisemiquinone to ubiquinol. The polypeptide is Na(+)-translocating NADH-quinone reductase subunit D (Chlamydia caviae (strain ATCC VR-813 / DSM 19441 / 03DC25 / GPIC) (Chlamydophila caviae)).